The chain runs to 950 residues: Leucine--tRNA ligase (950 aa).

The 'HIGH' region motif lies at 42-52; sequence PYLNGNLHAGH. A 'KMSKS' region motif is present at residues 629–633; the sequence is KMSKS. Lys-632 is an ATP binding site. The segment at 928–950 is disordered; that stretch reads NPPYDPKGRAQNAEPGRPAIYIE.

The protein belongs to the class-I aminoacyl-tRNA synthetase family.

It localises to the cytoplasm. The catalysed reaction is tRNA(Leu) + L-leucine + ATP = L-leucyl-tRNA(Leu) + AMP + diphosphate. The protein is Leucine--tRNA ligase of Methanothrix thermoacetophila (strain DSM 6194 / JCM 14653 / NBRC 101360 / PT) (Methanosaeta thermophila).